We begin with the raw amino-acid sequence, 330 residues long: Methylthioribose-1-phosphate isomerase (330 aa).

Substrate contacts are provided by residues 49–51, Arg-83, and Gln-179; that span reads RGA. The active-site Proton donor is Asp-220. 230–231 contributes to the substrate binding site; that stretch reads NK.

This sequence belongs to the eIF-2B alpha/beta/delta subunits family. MtnA subfamily.

It carries out the reaction 5-(methylsulfanyl)-alpha-D-ribose 1-phosphate = 5-(methylsulfanyl)-D-ribulose 1-phosphate. It participates in amino-acid biosynthesis; L-methionine biosynthesis via salvage pathway; L-methionine from S-methyl-5-thio-alpha-D-ribose 1-phosphate: step 1/6. Functionally, catalyzes the interconversion of methylthioribose-1-phosphate (MTR-1-P) into methylthioribulose-1-phosphate (MTRu-1-P). The polypeptide is Methylthioribose-1-phosphate isomerase (Thermus thermophilus (strain ATCC BAA-163 / DSM 7039 / HB27)).